The sequence spans 100 residues: Small ribosomal subunit protein uS14 (100 aa).

The protein belongs to the universal ribosomal protein uS14 family. As to quaternary structure, part of the 30S ribosomal subunit. Contacts proteins S3 and S10.

Binds 16S rRNA, required for the assembly of 30S particles and may also be responsible for determining the conformation of the 16S rRNA at the A site. The chain is Small ribosomal subunit protein uS14 from Prochlorococcus marinus (strain MIT 9211).